The following is a 567-amino-acid chain: Organic cation transporter-like protein (567 aa).

The Cytoplasmic segment spans residues 1-21; sequence MGYDEAIIHLGDFGRYQKIIY. A helical membrane pass occupies residues 22-42; it reads FLICLTSIPVAFHKLAGVFLL. Over 43-127 the chain is Extracellular; sequence AKPDFRCALP…TEWNLVCGRD (85 aa). Asparagine 55, asparagine 67, asparagine 89, and asparagine 97 each carry an N-linked (GlcNAc...) asparagine glycan. A helical membrane pass occupies residues 128–148; sequence FMAATSDSLFMLGVLLGSIVF. Topologically, residues 149–158 are cytoplasmic; the sequence is GQLSDKYGRK. A helical transmembrane segment spans residues 159 to 179; it reads PILFASLVIQVLFGVLAGVAP. At 180 to 189 the chain is on the extracellular side; it reads EYFTYTFARL. A helical membrane pass occupies residues 190–210; that stretch reads MVGATTSGVFLVAYVVAMEMV. At 211–219 the chain is on the cytoplasmic side; the sequence is GPDKRLYAG. Residues 220 to 240 form a helical membrane-spanning segment; the sequence is IFVMMFFSVGFMLTAVFAYFV. The Extracellular portion of the chain corresponds to 241 to 244; that stretch reads HDWR. The chain crosses the membrane as a helical span at residues 245 to 265; that stretch reads WLQIALTLPGLIFMFYYWIIP. Topologically, residues 266-343 are cytoplasmic; it reads ESARWLLLKG…LFCYPNLRRK (78 aa). Residues 304-326 are disordered; the sequence is LDEGENSEEKAKQKLEDQELDEG. Over residues 310 to 320 the composition is skewed to basic and acidic residues; it reads SEEKAKQKLED. A helical transmembrane segment spans residues 344–364; the sequence is TLLIFLDWLVTSGVYYGLSWN. Residues 365 to 371 are Extracellular-facing; the sequence is TSNLGGN. The helical transmembrane segment at 372–392 threads the bilayer; it reads VLLNFVISGAVEIPAYIFLLL. Topologically, residues 393–400 are cytoplasmic; sequence TLNRWGRR. Residues 401-421 traverse the membrane as a helical segment; it reads SILCGCLVMAGLSLLATVIIP. The Extracellular segment spans residues 422 to 427; that stretch reads QRMHTL. A helical transmembrane segment spans residues 428–448; the sequence is IVACAMLGKLAITASYGTVYI. At 449–462 the chain is on the cytoplasmic side; it reads FSAEQFPTVVRNVA. The helical transmembrane segment at 463 to 483 threads the bilayer; it reads LGAASMVARISGMMAPFLNFL. Residues 484–489 are Extracellular-facing; the sequence is ATIWKP. Residues 490–510 form a helical membrane-spanning segment; sequence LPLLICGSLTLVAGLLSLLLP. Over 511–567 the chain is Cytoplasmic; it reads ETHNKPMLETIADGERFGKKTKADVYLETGQELRAPEAQPLKGSGETNGSTIANGHK. The disordered stretch occupies residues 546 to 567; that stretch reads PEAQPLKGSGETNGSTIANGHK. Residues 555 to 567 are compositionally biased toward polar residues; that stretch reads GETNGSTIANGHK.

The protein belongs to the major facilitator (TC 2.A.1) superfamily. Organic cation transporter (TC 2.A.1.19) family.

Its subcellular location is the membrane. Probably transports organic cations. The chain is Organic cation transporter-like protein (Orct2) from Drosophila melanogaster (Fruit fly).